Here is an 83-residue protein sequence, read N- to C-terminus: ATP synthase subunit 9, mitochondrial (83 aa).

The next 2 membrane-spanning stretches (helical) occupy residues 8–28 (IGAG…GNVL) and 45–72 (SFGY…LISS).

Belongs to the ATPase C chain family. F-type ATPases have 2 components, CF(1) - the catalytic core - and CF(0) - the membrane proton channel. CF(1) has five subunits: alpha(3), beta(3), gamma(1), delta(1), epsilon(1). CF(0) has three main subunits: a, b and c.

It localises to the mitochondrion membrane. In terms of biological role, this protein is one of the chains of the nonenzymatic membrane component (F0) of mitochondrial ATPase. The sequence is that of ATP synthase subunit 9, mitochondrial (ATP9) from Helianthus annuus (Common sunflower).